Here is an 815-residue protein sequence, read N- to C-terminus: uncharacterized protein (815 aa).

The first 25 residues, 1–25, serve as a signal peptide directing secretion; that stretch reads MVVMKKKRILIVSAIVLLFLTVASA. 6 helical membrane-spanning segments follow: residues 127-147, 157-177, 311-331, 333-353, 372-392, and 401-421; these read FGEA…CVRG, ILFI…GYYM, SFIA…LAFF, FLLQ…FILA, VYLL…TCFI, and GFGM…IGFH. A disordered region spans residues 483–815; the sequence is KDGSNADGVT…DRLRRDERTR (333 aa). Over residues 513–543 the composition is skewed to polar residues; sequence HAISRTPQKETANGIANHNSRSLKRNPQTLS. 2 stretches are compositionally biased toward basic and acidic residues: residues 544–563 and 599–614; these read KEQE…ENKQ and QDKK…KEYV. The segment covering 619–630 has biased composition (polar residues); sequence KQPNNQQQTDDA. Basic and acidic residues predominate over residues 648 to 658; the sequence is ENEKDTERTDQ. Residues 665 to 678 are compositionally biased toward polar residues; it reads EQNQNLETDQQQDF. Positions 696-705 are enriched in basic and acidic residues; that stretch reads KTAEIKRSDQ. Over residues 720–732 the composition is skewed to polar residues; sequence SPQSTKVENQPIA. The segment covering 734–757 has biased composition (basic and acidic residues); sequence NERKIRPSEPAKVHSDGIRVDEKQ. Residues 773–793 are compositionally biased toward polar residues; that stretch reads PSSQTIKRTEQSVNSFDQVSL. The span at 796 to 815 shows a compositional bias: basic and acidic residues; sequence IARRSSSKVEDRLRRDERTR.

The protein resides in the cell membrane. This is an uncharacterized protein from Bacillus subtilis (strain 168).